Consider the following 111-residue polypeptide: MMMEVKAIHKGARISAQKTRLVADQIRGLPIARALNILNFSPKKAAFIVKKVVESAVANAEHNKGADIDELKVSAIIVDKGTSLKRFTARAKGRGNQIEKQTCHISVTLSN.

The protein belongs to the universal ribosomal protein uL22 family. In terms of assembly, part of the 50S ribosomal subunit.

This protein binds specifically to 23S rRNA; its binding is stimulated by other ribosomal proteins, e.g. L4, L17, and L20. It is important during the early stages of 50S assembly. It makes multiple contacts with different domains of the 23S rRNA in the assembled 50S subunit and ribosome. Functionally, the globular domain of the protein is located near the polypeptide exit tunnel on the outside of the subunit, while an extended beta-hairpin is found that lines the wall of the exit tunnel in the center of the 70S ribosome. This Polynucleobacter necessarius subsp. necessarius (strain STIR1) protein is Large ribosomal subunit protein uL22.